We begin with the raw amino-acid sequence, 113 residues long: Non-specific lipid-transfer protein (113 aa).

The first 24 residues, 1-24 (AQVMLMAVALVLMLAAVPRAAVAI), serve as a signal peptide directing secretion. 4 disulfides stabilise this stretch: cysteine 26–cysteine 73, cysteine 36–cysteine 50, cysteine 51–cysteine 96, and cysteine 71–cysteine 110. Aspartate 30 is lipidated: Cis-14-hydroxy-10,13-dioxo-7-heptadecenoic acid aspartate ester.

It belongs to the plant LTP family.

In terms of biological role, plant non-specific lipid-transfer proteins transfer phospholipids as well as galactolipids across membranes. May play a role in wax or cutin deposition in the cell walls of expanding epidermal cells and certain secretory tissues. The protein is Non-specific lipid-transfer protein of Triticum aestivum (Wheat).